The following is an 88-amino-acid chain: Beta-insect excitatory toxin 2 (88 aa).

Residues 1–18 form the signal peptide; it reads MKFLLLFLVVLPIMGVLG. The LCN-type CS-alpha/beta domain maps to 20–83; it reads KNGYAVDSSG…ISDTRKSYCD (64 aa). Cystine bridges form between Cys34/Cys55, Cys40/Cys60, Cys44/Cys62, and Cys56/Cys82.

Belongs to the long (4 C-C) scorpion toxin superfamily. Sodium channel inhibitor family. Beta subfamily. As to expression, expressed by the venom gland.

It localises to the secreted. Excitatory insect beta-toxins induce a spastic paralysis. They bind voltage-independently at site-4 of sodium channels (Nav) and shift the voltage of activation toward more negative potentials thereby affecting sodium channel activation and promoting spontaneous and repetitive firing. This toxin is active only on insects. This is Beta-insect excitatory toxin 2 from Androctonus australis (Sahara scorpion).